A 444-amino-acid polypeptide reads, in one-letter code: Divalent metal cation transporter MntH (444 aa).

Helical transmembrane passes span 39–59, 69–89, 109–128, 146–166, 175–195, 215–235, 264–284, 304–324, 346–366, 372–392, and 417–437; these read LLFA…GNFA, GYTL…FQAL, FSRP…AMAT, LPLI…LLFE, LVIG…MFIA, TALT…AVYL, VILA…MAAS, TPLL…TSGI, IPVW…ILAG, ALVI…IALI, and AAAI…GFTI.

The protein belongs to the NRAMP family.

The protein localises to the cell inner membrane. Functionally, h(+)-stimulated, divalent metal cation uptake system. In Granulibacter bethesdensis (strain ATCC BAA-1260 / CGDNIH1), this protein is Divalent metal cation transporter MntH.